The primary structure comprises 587 residues: MAARDDAEARAAQREREVADLTTQVSFLQEELTALRRKLTESPRQARVLEERLHEVQANLAAVTGQNERLVATLKEARDQIVALKEEVDRLAQPPSGFGVFLESREDGTVEVFTGGRKLRVNVSPAVEVDSLKRGQEVMLNEALNVVEALGFEELGEIVMLKELLEDGRRALVISHADEERVVKLAESLVGQPIRAGDSLLLEPRSGYVYERIPKSEVEELVLEEVPDISYEEIGGLMRQIEQIRDAIELPYLHADLFREHKLRPPKGVLLYGPPGCGKTLIAKAVANSLAKQVAEKTGQSGKSFFLNIKGPELLNKYVGETERHIRLVFQRAREKASEGTPVIVFFDEMDSIFRTRGSGVSSDVENTIVPQLLSEIDGVEGLENVIVIGASNREDMIDPAILRPGRLDVKIKIERPDAEAAKDIFSKYLIEDLPLHPEDLAEHGGSRGGTISGMIQRVVERMYTESEENRFLEVTYANGDKEVLYFKDFNSGAMIQNIVDRSKKMAIKQFLESGQKGLRIQHLLAACVDEFSENEDLPNTTNPDDWARISGKKGERIVYIRTLVTGKQGTEAGRSIDTVANTGQYL.

Residues 1–94 are a coiled coil; that stretch reads MAARDDAEAR…KEEVDRLAQP (94 aa). 276–281 contributes to the ATP binding site; that stretch reads GCGKTL. The docks into pockets in the proteasome alpha-ring stretch occupies residues 586–587; that stretch reads YL.

Belongs to the AAA ATPase family. As to quaternary structure, homohexamer. Assembles into a hexameric ring structure that caps the 20S proteasome core. Strongly interacts with the prokaryotic ubiquitin-like protein Pup through a hydrophobic interface; the interacting region of ARC lies in its N-terminal coiled-coil domain. There is one Pup binding site per ARC hexamer ring. Upon ATP-binding, the C-terminus of ARC interacts with the alpha-rings of the proteasome core, possibly by binding to the intersubunit pockets.

The protein operates within protein degradation; proteasomal Pup-dependent pathway. ATPase which is responsible for recognizing, binding, unfolding and translocation of pupylated proteins into the bacterial 20S proteasome core particle. May be essential for opening the gate of the 20S proteasome via an interaction with its C-terminus, thereby allowing substrate entry and access to the site of proteolysis. Thus, the C-termini of the proteasomal ATPase may function like a 'key in a lock' to induce gate opening and therefore regulate proteolysis. This is Proteasome-associated ATPase from Streptosporangium roseum (strain ATCC 12428 / DSM 43021 / JCM 3005 / KCTC 9067 / NCIMB 10171 / NRRL 2505 / NI 9100).